A 285-amino-acid chain; its full sequence is Urease accessory protein UreD (285 aa).

The protein belongs to the UreD family. As to quaternary structure, ureD, UreF and UreG form a complex that acts as a GTP-hydrolysis-dependent molecular chaperone, activating the urease apoprotein by helping to assemble the nickel containing metallocenter of UreC. The UreE protein probably delivers the nickel.

It is found in the cytoplasm. Functionally, required for maturation of urease via the functional incorporation of the urease nickel metallocenter. This Cytophaga hutchinsonii (strain ATCC 33406 / DSM 1761 / CIP 103989 / NBRC 15051 / NCIMB 9469 / D465) protein is Urease accessory protein UreD.